Here is a 1077-residue protein sequence, read N- to C-terminus: Error-prone DNA polymerase (1077 aa).

It belongs to the DNA polymerase type-C family. DnaE2 subfamily.

It is found in the cytoplasm. It carries out the reaction DNA(n) + a 2'-deoxyribonucleoside 5'-triphosphate = DNA(n+1) + diphosphate. In terms of biological role, DNA polymerase involved in damage-induced mutagenesis and translesion synthesis (TLS). It is not the major replicative DNA polymerase. The polypeptide is Error-prone DNA polymerase (Brucella suis biovar 1 (strain 1330)).